We begin with the raw amino-acid sequence, 181 residues long: Interleukin-10 (181 aa).

The first 19 residues, 1 to 19 (MHGSALLCCCLVLLAGVGA), serve as a signal peptide directing secretion. Intrachain disulfides connect C31/C129 and C81/C135. An N-linked (GlcNAc...) asparagine glycan is attached at N137.

It belongs to the IL-10 family. In terms of assembly, homodimer. Interacts with IL10RA and IL10RB.

Its subcellular location is the secreted. Major immune regulatory cytokine that acts on many cells of the immune system where it has profound anti-inflammatory functions, limiting excessive tissue disruption caused by inflammation. Mechanistically, IL10 binds to its heterotetrameric receptor comprising IL10RA and IL10RB leading to JAK1 and STAT2-mediated phosphorylation of STAT3. In turn, STAT3 translocates to the nucleus where it drives expression of anti-inflammatory mediators. Targets antigen-presenting cells (APCs) such as macrophages and monocytes and inhibits their release of pro-inflammatory cytokines including granulocyte-macrophage colony-stimulating factor /GM-CSF, granulocyte colony-stimulating factor/G-CSF, IL-1 alpha, IL-1 beta, IL-6, IL-8 and TNF-alpha. Also interferes with antigen presentation by reducing the expression of MHC-class II and co-stimulatory molecules, thereby inhibiting their ability to induce T cell activation. In addition, controls the inflammatory response of macrophages by reprogramming essential metabolic pathways including mTOR signaling. The chain is Interleukin-10 (IL10) from Canis lupus familiaris (Dog).